The chain runs to 278 residues: Tyrosine-protein phosphatase pmp1 (278 aa).

One can recognise a Tyrosine-protein phosphatase domain in the interval 60–214 (GPVCIYPPNI…LSEYQQIIRK (155 aa)). C158 acts as the Phosphocysteine intermediate in catalysis. The segment at 217-278 (SQGPYQSSSL…SSGSISNDAS (62 aa)) is disordered. The segment covering 252-278 (SPSTSESSMFTNLRRTRSSGSISNDAS) has biased composition (polar residues).

It belongs to the protein-tyrosine phosphatase family. Non-receptor class dual specificity subfamily.

The catalysed reaction is O-phospho-L-tyrosyl-[protein] + H2O = L-tyrosyl-[protein] + phosphate. Its function is as follows. Dual specificity phosphatase that dephosphorylates MAP kinase pmk1 on a Tyr. Has a role in chloride ion homeostasis by inactivating this pmk1 MAP kinase pathway. In Schizosaccharomyces pombe (strain 972 / ATCC 24843) (Fission yeast), this protein is Tyrosine-protein phosphatase pmp1 (pmp1).